The sequence spans 467 residues: 6-phosphogluconate dehydrogenase, decarboxylating (467 aa).

NADP(+)-binding positions include 9–14 (GLGVMG), 32–34 (NYT), 73–75 (VTA), and Asn101. Substrate is bound by residues Asn101 and 127–129 (SGG). The Proton acceptor role is filled by Lys181. 184 to 185 (HN) lines the substrate pocket. Glu188 serves as the catalytic Proton donor. Residues Tyr189, Lys259, Arg286, and His451 each contribute to the substrate site.

This sequence belongs to the 6-phosphogluconate dehydrogenase family. As to quaternary structure, homodimer.

It catalyses the reaction 6-phospho-D-gluconate + NADP(+) = D-ribulose 5-phosphate + CO2 + NADPH. It functions in the pathway carbohydrate degradation; pentose phosphate pathway; D-ribulose 5-phosphate from D-glucose 6-phosphate (oxidative stage): step 3/3. Its function is as follows. Catalyzes the oxidative decarboxylation of 6-phosphogluconate to ribulose 5-phosphate and CO(2), with concomitant reduction of NADP to NADPH. The chain is 6-phosphogluconate dehydrogenase, decarboxylating (gntZ) from Bacillus licheniformis.